The chain runs to 208 residues: MEDKTVELQFITHFTDTYSYYDSARMALEGGCRWIQLRMKDTPVDEVEREAIRLQGLCKDYGATFVIDDHVELVKKIHADGVHLGKKDMPVAEARGILGKEFIIGGTANTFDDVKMHYKAGADYIGCGPFRFTTTKKDLSPVLGLEGYRSIILQMKEANIHLPIVAIGGITLEDIPSIMETGITGIALSGTILRAKDPVAETKRIMNL.

4-amino-2-methyl-5-(diphosphooxymethyl)pyrimidine contacts are provided by residues 36–40 and aspartate 68; that span reads QLRMK. Residues aspartate 69 and aspartate 88 each contribute to the Mg(2+) site. Threonine 107 contacts 4-amino-2-methyl-5-(diphosphooxymethyl)pyrimidine. 133–135 is a 2-[(2R,5Z)-2-carboxy-4-methylthiazol-5(2H)-ylidene]ethyl phosphate binding site; that stretch reads TTT. Residue lysine 136 participates in 4-amino-2-methyl-5-(diphosphooxymethyl)pyrimidine binding. Glycine 169 is a binding site for 2-[(2R,5Z)-2-carboxy-4-methylthiazol-5(2H)-ylidene]ethyl phosphate.

The protein belongs to the thiamine-phosphate synthase family. Requires Mg(2+) as cofactor.

It carries out the reaction 2-[(2R,5Z)-2-carboxy-4-methylthiazol-5(2H)-ylidene]ethyl phosphate + 4-amino-2-methyl-5-(diphosphooxymethyl)pyrimidine + 2 H(+) = thiamine phosphate + CO2 + diphosphate. It catalyses the reaction 2-(2-carboxy-4-methylthiazol-5-yl)ethyl phosphate + 4-amino-2-methyl-5-(diphosphooxymethyl)pyrimidine + 2 H(+) = thiamine phosphate + CO2 + diphosphate. The enzyme catalyses 4-methyl-5-(2-phosphooxyethyl)-thiazole + 4-amino-2-methyl-5-(diphosphooxymethyl)pyrimidine + H(+) = thiamine phosphate + diphosphate. It participates in cofactor biosynthesis; thiamine diphosphate biosynthesis; thiamine phosphate from 4-amino-2-methyl-5-diphosphomethylpyrimidine and 4-methyl-5-(2-phosphoethyl)-thiazole: step 1/1. Its function is as follows. Condenses 4-methyl-5-(beta-hydroxyethyl)thiazole monophosphate (THZ-P) and 2-methyl-4-amino-5-hydroxymethyl pyrimidine pyrophosphate (HMP-PP) to form thiamine monophosphate (TMP). This is Thiamine-phosphate synthase from Phocaeicola vulgatus (strain ATCC 8482 / DSM 1447 / JCM 5826 / CCUG 4940 / NBRC 14291 / NCTC 11154) (Bacteroides vulgatus).